Here is a 50-residue protein sequence, read N- to C-terminus: Large ribosomal subunit protein bL33 (50 aa).

The protein belongs to the bacterial ribosomal protein bL33 family.

In Solibacter usitatus (strain Ellin6076), this protein is Large ribosomal subunit protein bL33.